The chain runs to 220 residues: Thioredoxin domain-containing protein (220 aa).

The N-terminal stretch at 1–19 (MKFLILNCLILFSLISSEA) is a signal peptide. The Thioredoxin domain maps to 20-141 (TNVKLDREDQ…SEFALGDFKN (122 aa)). Residues 20–181 (TNVKLDREDQ…YDAALAGFVT (162 aa)) are Lumenal-facing. A disulfide bridge links C64 with C67. Residues 182–202 (ISSFSFLFGLLVGLMLSLFLF) traverse the membrane as a helical segment. The Cytoplasmic segment spans residues 203-220 (TRRATRKPKVLTERKKDK). A Di-lysine motif motif is present at residues 217 to 220 (KKDK).

Belongs to the protein disulfide isomerase family.

It localises to the endoplasmic reticulum membrane. The chain is Thioredoxin domain-containing protein from Theileria parva (East coast fever infection agent).